We begin with the raw amino-acid sequence, 179 residues long: Phospholipase A2 (179 aa).

A signal peptide spans Met1–Ala21. The propeptide occupies Trp22 to Arg39. Trp47, Gly49, and Gly51 together coordinate Ca(2+). 5 disulfides stabilise this stretch: Cys48-Cys70, Cys69-Cys109, Cys76-Cys102, Cys100-Cys133, and Cys142-Cys150. Residue His73 is part of the active site. Asp74 provides a ligand contact to Ca(2+). Asp103 is an active-site residue.

Belongs to the phospholipase A2 family. Group III subfamily. It depends on Ca(2+) as a cofactor. As to expression, expressed by the venom gland.

Its subcellular location is the secreted. The enzyme catalyses a 1,2-diacyl-sn-glycero-3-phosphocholine + H2O = a 1-acyl-sn-glycero-3-phosphocholine + a fatty acid + H(+). In terms of biological role, may potentiate Xylotoxin(1)-Xa1a DRG activation and cell lysis, since the orthologous A.mellifera PA2 potentiates Xylotoxin(1)-Xa1a DRG activation and cell lysis. In vivo, intraplantar injection in mice may potentiate spontaneous pain behaviors and paw swelling caused by Xylotoxin(1)-Xa1a, since the orthologous A.mellifera PA2 shows this effect. PLA2 catalyzes the calcium-dependent hydrolysis of the 2-acyl groups in 3-sn-phosphoglycerides. The sequence is that of Phospholipase A2 from Xylocopa aruana (Great carpenter bee).